Here is a 150-residue protein sequence, read N- to C-terminus: Large ribosomal subunit protein bL9 (150 aa).

Belongs to the bacterial ribosomal protein bL9 family.

Its function is as follows. Binds to the 23S rRNA. This chain is Large ribosomal subunit protein bL9, found in Streptococcus agalactiae serotype III (strain NEM316).